Reading from the N-terminus, the 1246-residue chain is Zinc finger protein 687a (1246 aa).

Residues 24–47 (KEAIQSDTHGNHNEHSSVVGKERS) show a composition bias toward basic and acidic residues. The tract at residues 24–387 (KEAIQSDTHG…PTLVESASDA (364 aa)) is disordered. 2 stretches are compositionally biased toward polar residues: residues 88–111 (GEFS…SSVP) and 163–195 (AFTN…FSSK). Residues 287 to 301 (SSTNPTSLTSTNNLP) show a composition bias toward low complexity. Basic and acidic residues predominate over residues 302-317 (VEEKDLEHIIEERDSP). Residues 326–338 (QSRTSLPSNSQGA) show a composition bias toward polar residues. Composition is skewed to basic and acidic residues over residues 341-350 (SKQRITREEA) and 360-375 (MQEK…EGKS). The C2H2-type 1 zinc-finger motif lies at 587 to 619 (YRCLECGDAFALERSLARHYDRRSMRIEVTCNH). The C2H2-type 2; degenerate zinc finger occupies 696-719 (HSCPECWSTFKGKQELVAHFQEVE). C2H2-type zinc fingers lie at residues 817–840 (HKCP…ASQH), 854–876 (YKCV…IDTH), and 885–908 (FKCP…KDTH). Positions 907 to 953 (THRETSNHDGTSTQNSLVKMESSDGEEWGRDEEEDKGKVSDANSAVP) are disordered. Residues 914–923 (HDGTSTQNSL) show a composition bias toward polar residues. Residues 929-940 (SDGEEWGRDEEE) show a composition bias toward acidic residues. 2 C2H2-type zinc fingers span residues 958–981 (WSCS…TEQH) and 988–1011 (FPCT…RVKH). A C2H2-type 8; degenerate zinc finger spans residues 1018–1044 (FYCQLCTGEKRSFSSKLILEKHIQAQH). The interval 1045–1093 (AGERGTATQSQAVPQFTDGADSSSEHDAGVLGGSSVEPESRLAESTLTR) is disordered. C2H2-type zinc fingers lie at residues 1137-1160 (AQCQ…FISH) and 1210-1232 (HICK…FRTH).

Belongs to the krueppel C2H2-type zinc-finger protein family. As to expression, widely expressed with highest levels in kidney, spleen and ovary.

The protein localises to the nucleus. Functionally, may be involved in transcriptional regulation. The polypeptide is Zinc finger protein 687a (znf687a) (Danio rerio (Zebrafish)).